The chain runs to 378 residues: Cln5-like protein 1 (378 aa).

Positions Met1–Gly20 are cleaved as a signal peptide. Residues Asn63, Asn93, Asn135, Asn181, Asn220, Asn226, Asn254, and Asn280 are each glycosylated (N-linked (GlcNAc...) asparagine). A helical membrane pass occupies residues Trp308–Ile328.

It belongs to the CLN5 family.

The protein localises to the membrane. The polypeptide is Cln5-like protein 1 (cln5la) (Dictyostelium discoideum (Social amoeba)).